Consider the following 912-residue polypeptide: Eukaryotic translation initiation factor 3 subunit C (912 aa).

The interval 1–44 (MSRFFTTGSDSESESSLSGEELVTKPVGGNYGKQPLLLSEDEED) is disordered. A compositionally biased stretch (low complexity) spans 8–21 (GSDSESESSLSGEE). Ser-9, Ser-11, Ser-13, Ser-15, Ser-16, Ser-18, and Ser-39 each carry phosphoserine. Lys-99 bears the N6-acetyllysine mark. 2 disordered regions span residues 157 to 305 (TNYK…RVRG) and 521 to 541 (QLTP…NEGE). A phosphoserine mark is found at Ser-166, Ser-178, Ser-181, and Ser-182. Positions 166 to 190 (SADEDAEKNEEDSEGSSDEDEDDDG) are enriched in acidic residues. Residues 199 to 215 (KKSEAPSGDSRKFLKKE) show a composition bias toward basic and acidic residues. Residues 216–229 (DEDEDSEESEDSEA) show a composition bias toward acidic residues. Positions 260-277 (PTTEEDKKAAEKKREDKA) are enriched in basic and acidic residues. The segment covering 521-530 (QLTPPEGSSK) has biased composition (polar residues). Thr-523 bears the Phosphothreonine mark. Position 642 is an N6-acetyllysine (Lys-642). The 177-residue stretch at 672 to 848 (FHLHINLELL…QTVVMHRTEP (177 aa)) folds into the PCI domain. The disordered stretch occupies residues 884 to 912 (FRDQKDGYRKNEGYMRRGGYRQQQSQTAY). Positions 885–898 (RDQKDGYRKNEGYM) are enriched in basic and acidic residues. Ser-908 carries the post-translational modification Phosphoserine.

It belongs to the eIF-3 subunit C family. In terms of assembly, component of the eukaryotic translation initiation factor 3 (eIF-3) complex, which is composed of 13 subunits: EIF3A, EIF3B, EIF3C, EIF3D, EIF3E, EIF3F, EIF3G, EIF3H, EIF3I, EIF3J, EIF3K, EIF3L and EIF3M. The eIF-3 complex appears to include 3 stable modules: module A is composed of EIF3A, EIF3B, EIF3G and EIF3I; module B is composed of EIF3F, EIF3H, and EIF3M; and module C is composed of EIF3C, EIF3D, EIF3E, EIF3K and EIF3L. EIF3C of module C binds EIF3B of module A and EIF3H of module B, thereby linking the three modules. EIF3J is a labile subunit that binds to the eIF-3 complex via EIF3B. The eIF-3 complex interacts with RPS6KB1 under conditions of nutrient depletion. Mitogenic stimulation leads to binding and activation of a complex composed of MTOR and RPTOR, leading to phosphorylation and release of RPS6KB1 and binding of EIF4B to eIF-3. Identified in a HCV IRES-mediated translation complex, at least composed of EIF3C, IGF2BP1, RPS3 and HCV RNA-replicon. Interacts with ALKBH4, IFIT1 and IFIT2. Interacts with BZW2/5MP1. In terms of processing, phosphorylated. Phosphorylation is enhanced upon serum stimulation.

It is found in the cytoplasm. Functionally, component of the eukaryotic translation initiation factor 3 (eIF-3) complex, which is required for several steps in the initiation of protein synthesis. The eIF-3 complex associates with the 40S ribosome and facilitates the recruitment of eIF-1, eIF-1A, eIF-2:GTP:methionyl-tRNAi and eIF-5 to form the 43S pre-initiation complex (43S PIC). The eIF-3 complex stimulates mRNA recruitment to the 43S PIC and scanning of the mRNA for AUG recognition. The eIF-3 complex is also required for disassembly and recycling of post-termination ribosomal complexes and subsequently prevents premature joining of the 40S and 60S ribosomal subunits prior to initiation. The eIF-3 complex specifically targets and initiates translation of a subset of mRNAs involved in cell proliferation, including cell cycling, differentiation and apoptosis, and uses different modes of RNA stem-loop binding to exert either translational activation or repression. The sequence is that of Eukaryotic translation initiation factor 3 subunit C from Bos taurus (Bovine).